A 277-amino-acid polypeptide reads, in one-letter code: Large ribosomal subunit protein uL2 (277 aa).

Disordered regions lie at residues 32–58 (KSLTKGKKFKSGRDSSGRISIRRRGGG) and 225–277 (VAMN…RRNK). The span at 258–277 (YKTRKKKRYSDKFIIKRRNK) shows a compositional bias: basic residues.

This sequence belongs to the universal ribosomal protein uL2 family. In terms of assembly, part of the 50S ribosomal subunit. Forms a bridge to the 30S subunit in the 70S ribosome.

Functionally, one of the primary rRNA binding proteins. Required for association of the 30S and 50S subunits to form the 70S ribosome, for tRNA binding and peptide bond formation. It has been suggested to have peptidyltransferase activity; this is somewhat controversial. Makes several contacts with the 16S rRNA in the 70S ribosome. This Borreliella burgdorferi (strain ATCC 35210 / DSM 4680 / CIP 102532 / B31) (Borrelia burgdorferi) protein is Large ribosomal subunit protein uL2.